A 527-amino-acid chain; its full sequence is F-box-like/WD repeat-containing protein TBL1X (527 aa).

Serine 2 carries the post-translational modification N-acetylserine. The LisH domain occupies 4–36 (TSDEVNFLVYRYLQESGFSHSAFTFGIESHISQ). The region spanning 41-86 (GTLVPPAALISILQKGLQYVEAEISINEDGTVFDGRPIESLSLIDA) is the F-box-like domain. At lysine 102 the chain carries N6-acetyllysine. Residues 127 to 164 (TTPAAAAQQNPPKNGEATVNGEENGAHAINNHSKPMEI) are disordered. WD repeat units follow at residues 180-219 (GHES…NGGS), 236-275 (PSNK…ASTL), 277-316 (QHKG…AKQQ), 319-359 (FHSA…KTFQ), 360-399 (GHTN…CVHD), 402-450 (AHSK…CIHT), 453-492 (KHQE…LVHS), and 494-526 (RGTG…LDLR). Residue lysine 290 forms a Glycyl lysine isopeptide (Lys-Gly) (interchain with G-Cter in SUMO2) linkage.

It belongs to the WD repeat EBI family. As to quaternary structure, homotetramer; dimer of dimers. Component of the N-Cor repressor complex, at least composed of NCOR1, NCOR2, HDAC3, TBL1X, TBL1R, CORO2A and GPS2. Component of a E3 ubiquitin ligase complex containing UBE2D1, SIAH1, CACYBP/SIP, SKP1, APC and TBL1X. Interacts with GPS2 (when sumoylated); leading to protect GPS2 against degradation by the proteasome. Probably part of other corepressor complexes, that do not contain NCOR1 and NCOR2. Interacts with histones H2B, H3a and H4. Interacts with MECP2; recruits TBL1X to the heterochromatin foci. Interacts with USP44. In terms of tissue distribution, expressed in the cochlea.

The protein resides in the nucleus. F-box-like protein involved in the recruitment of the ubiquitin/19S proteasome complex to nuclear receptor-regulated transcription units. Plays an essential role in transcription activation mediated by nuclear receptors. Probably acts as integral component of corepressor complexes that mediates the recruitment of the 19S proteasome complex, leading to the subsequent proteasomal degradation of transcription repressor complexes, thereby allowing cofactor exchange. This Mus musculus (Mouse) protein is F-box-like/WD repeat-containing protein TBL1X (Tbl1x).